A 124-amino-acid polypeptide reads, in one-letter code: Glycine cleavage system H protein (124 aa).

Residues 22–104 (LVITGITDHA…YGKGWIYKIK (83 aa)) enclose the Lipoyl-binding domain. Lys-63 carries the N6-lipoyllysine modification.

The protein belongs to the GcvH family. As to quaternary structure, the glycine cleavage system is composed of four proteins: P, T, L and H. Requires (R)-lipoate as cofactor.

Functionally, the glycine cleavage system catalyzes the degradation of glycine. The H protein shuttles the methylamine group of glycine from the P protein to the T protein. The sequence is that of Glycine cleavage system H protein from Acinetobacter baumannii (strain ACICU).